The primary structure comprises 72 residues: Translation initiation factor IF-1 2 (72 aa).

Residues 1–72 enclose the S1-like domain; that stretch reads MAKEELIEFE…TKGRINYRHK (72 aa).

The protein belongs to the IF-1 family. Component of the 30S ribosomal translation pre-initiation complex which assembles on the 30S ribosome in the order IF-2 and IF-3, IF-1 and N-formylmethionyl-tRNA(fMet); mRNA recruitment can occur at any time during PIC assembly.

It localises to the cytoplasm. One of the essential components for the initiation of protein synthesis. Stabilizes the binding of IF-2 and IF-3 on the 30S subunit to which N-formylmethionyl-tRNA(fMet) subsequently binds. Helps modulate mRNA selection, yielding the 30S pre-initiation complex (PIC). Upon addition of the 50S ribosomal subunit IF-1, IF-2 and IF-3 are released leaving the mature 70S translation initiation complex. The sequence is that of Translation initiation factor IF-1 2 from Ralstonia nicotianae (strain ATCC BAA-1114 / GMI1000) (Ralstonia solanacearum).